Consider the following 539-residue polypeptide: Phosphoenolpyruvate carboxykinase (ATP) (539 aa).

Substrate is bound by residues Arg64, Tyr206, and Lys212. ATP is bound by residues Lys212, His231, and 247 to 255; that span reads GLSGTGKTT. The Mn(2+) site is built by Lys212 and His231. Asp268 serves as a coordination point for Mn(2+). ATP is bound by residues Glu296, Arg332, 448-449, and Thr454; that span reads RI. Arg332 contributes to the substrate binding site.

This sequence belongs to the phosphoenolpyruvate carboxykinase (ATP) family. As to quaternary structure, monomer. It depends on Mn(2+) as a cofactor.

It localises to the cytoplasm. It catalyses the reaction oxaloacetate + ATP = phosphoenolpyruvate + ADP + CO2. It functions in the pathway carbohydrate biosynthesis; gluconeogenesis. Its function is as follows. Involved in the gluconeogenesis. Catalyzes the conversion of oxaloacetate (OAA) to phosphoenolpyruvate (PEP) through direct phosphoryl transfer between the nucleoside triphosphate and OAA. This is Phosphoenolpyruvate carboxykinase (ATP) from Pectobacterium carotovorum subsp. carotovorum (strain PC1).